A 159-amino-acid polypeptide reads, in one-letter code: NADH-quinone oxidoreductase subunit I (159 aa).

2 4Fe-4S ferredoxin-type domains span residues 51–80 and 90–119; these read RRYENGEERCIACKLCEAICPAQAIVIEAD and TRYDIDMTKCIYCGLCQEACPVDAIVEGPN. 8 residues coordinate [4Fe-4S] cluster: Cys-60, Cys-63, Cys-66, Cys-70, Cys-99, Cys-102, Cys-105, and Cys-109.

This sequence belongs to the complex I 23 kDa subunit family. NDH-1 is composed of 14 different subunits. Subunits NuoA, H, J, K, L, M, N constitute the membrane sector of the complex. [4Fe-4S] cluster serves as cofactor.

It localises to the cell membrane. The enzyme catalyses a quinone + NADH + 5 H(+)(in) = a quinol + NAD(+) + 4 H(+)(out). Its function is as follows. NDH-1 shuttles electrons from NADH, via FMN and iron-sulfur (Fe-S) centers, to quinones in the respiratory chain. The immediate electron acceptor for the enzyme in this species is believed to be ubiquinone. Couples the redox reaction to proton translocation (for every two electrons transferred, four hydrogen ions are translocated across the cytoplasmic membrane), and thus conserves the redox energy in a proton gradient. The protein is NADH-quinone oxidoreductase subunit I of Rickettsia africae (strain ESF-5).